The primary structure comprises 167 residues: Homeobox protein EgHBX3 (167 aa).

The homeobox DNA-binding region spans 80 to 139; it reads SQSKRRVLFNKFQISQLEKRLKQRYLTAQERQELAHTIGLTPTQVKIWFQNHAYKMKRLF.

It belongs to the NK-2 homeobox family.

It localises to the nucleus. This chain is Homeobox protein EgHBX3 (HBX3), found in Echinococcus granulosus (Hydatid tapeworm).